Consider the following 330-residue polypeptide: Phosphate acyltransferase (330 aa).

The protein belongs to the PlsX family. As to quaternary structure, homodimer. Probably interacts with PlsY.

It is found in the cytoplasm. It carries out the reaction a fatty acyl-[ACP] + phosphate = an acyl phosphate + holo-[ACP]. The protein operates within lipid metabolism; phospholipid metabolism. In terms of biological role, catalyzes the reversible formation of acyl-phosphate (acyl-PO(4)) from acyl-[acyl-carrier-protein] (acyl-ACP). This enzyme utilizes acyl-ACP as fatty acyl donor, but not acyl-CoA. The polypeptide is Phosphate acyltransferase (Streptococcus agalactiae serotype III (strain NEM316)).